We begin with the raw amino-acid sequence, 269 residues long: NAD kinase (269 aa).

The active-site Proton acceptor is the aspartate 45. NAD(+)-binding positions include 45–46 (DG), 122–123 (NE), arginine 149, aspartate 151, and alanine 186.

It belongs to the NAD kinase family. A divalent metal cation is required as a cofactor.

It localises to the cytoplasm. It carries out the reaction NAD(+) + ATP = ADP + NADP(+) + H(+). In terms of biological role, involved in the regulation of the intracellular balance of NAD and NADP, and is a key enzyme in the biosynthesis of NADP. Catalyzes specifically the phosphorylation on 2'-hydroxyl of the adenosine moiety of NAD to yield NADP. The polypeptide is NAD kinase (Staphylococcus epidermidis (strain ATCC 35984 / DSM 28319 / BCRC 17069 / CCUG 31568 / BM 3577 / RP62A)).